Consider the following 72-residue polypeptide: Large ribosomal subunit protein bL31 (72 aa).

Positions 17, 19, 37, and 40 each coordinate Zn(2+).

The protein belongs to the bacterial ribosomal protein bL31 family. Type A subfamily. As to quaternary structure, part of the 50S ribosomal subunit. Zn(2+) is required as a cofactor.

Binds the 23S rRNA. The protein is Large ribosomal subunit protein bL31 of Clostridium botulinum (strain ATCC 19397 / Type A).